The following is a 270-amino-acid chain: ES1 protein, mitochondrial (270 aa).

In terms of tissue distribution, expressed specifically in the inner segments of cone photoreceptor cells of the retina (at protein level).

The protein resides in the mitochondrion. In terms of biological role, plays a role in promoting mitochondrial enlargement in cone photoreceptor cells in a fusion-independent and ATP-dependent manner. The chain is ES1 protein, mitochondrial from Danio rerio (Zebrafish).